We begin with the raw amino-acid sequence, 394 residues long: Myb-related protein 2 (394 aa).

The 61-residue stretch at 42 to 102 folds into the HTH myb-type domain; that stretch reads TDAKPRLKWT…HLQKYRLSKN (61 aa). A DNA-binding region (H-T-H motif) is located at residues 73-98; that stretch reads PKTIMKVMGIPGLTLYHLKSHLQKYR. The coiled coil stretch occupies residues 148–168; that stretch reads GEALQMQIEVQRRLHEQLEVQ. Residues 161 to 166 carry the LHEQLE motif; that stretch reads LHEQLE. A disordered region spans residues 338–363; sequence LHGHKSQHQQGNNEDHKLETRNRKGM. Basic and acidic residues predominate over residues 350–363; it reads NEDHKLETRNRKGM.

The protein belongs to the MYB-CC family. In terms of assembly, isoform 1: Homodimer. Isoform 3: Does not form homodimer. As to expression, expressed in phloem and/or cambium.

Its subcellular location is the nucleus. Functionally, transcriptional activator that may activate the transcription of specific genes involved in nitrogen uptake or assimilation. Acts redundantly with MYR1 as a repressor of flowering and organ elongation under decreased light intensity. Represses gibberellic acid (GA)-dependent responses and affects levels of bioactive GA. The sequence is that of Myb-related protein 2 from Arabidopsis thaliana (Mouse-ear cress).